The chain runs to 132 residues: Small ribosomal subunit protein uS8 (132 aa).

Belongs to the universal ribosomal protein uS8 family. Part of the 30S ribosomal subunit. Contacts proteins S5 and S12.

Its function is as follows. One of the primary rRNA binding proteins, it binds directly to 16S rRNA central domain where it helps coordinate assembly of the platform of the 30S subunit. This chain is Small ribosomal subunit protein uS8, found in Paracoccus denitrificans (strain Pd 1222).